Reading from the N-terminus, the 467-residue chain is Neuromedin-K receptor (467 aa).

Over 1-86 the chain is Extracellular; that stretch reads MDSFAAAETW…TNQFVQPSWR (86 aa). 3 N-linked (GlcNAc...) asparagine glycosylation sites follow: Asn23, Asn50, and Asn75. Residues 87-109 form a helical membrane-spanning segment; the sequence is IALWSLAYGVVVAVAVFGNLIVI. Residues 110–119 lie on the Cytoplasmic side of the membrane; it reads WIILAHKRMR. The chain crosses the membrane as a helical span at residues 120-141; sequence TVTNYFLVNLAFSDASMAAFNT. Over 142–161 the chain is Extracellular; that stretch reads LVNFIYALHSEWYFGANYCR. Residues Cys160 and Cys235 are joined by a disulfide bond. Residues 162–183 form a helical membrane-spanning segment; that stretch reads FQNFFPITAVFASIYSMTAIAV. Residues 184-203 are Cytoplasmic-facing; that stretch reads DRYMAIIDPLKPRLSATATK. Residues 204-224 traverse the membrane as a helical segment; that stretch reads IVIGSIWILAFLLALPQCLYS. At 225 to 247 the chain is on the extracellular side; sequence KTKVMPGRTLCYVQWPEGPKQHF. A helical transmembrane segment spans residues 248–272; sequence IYHIIVIILVYCFPLLIMGITYTIV. Over 273–301 the chain is Cytoplasmic; it reads GITLWGGEIPGDTCDKYHEQLKAKRKVVK. Residues 302-323 form a helical membrane-spanning segment; the sequence is MMIIVVVTFAICWLPYHIYFIL. The Extracellular segment spans residues 324-336; the sequence is TAIYQQLNRWKYI. A helical transmembrane segment spans residues 337–361; that stretch reads QQVYLASFWLAMSSTMYNPIIYCCL. Residues 362-467 are Cytoplasmic-facing; the sequence is NKRFRAGFKR…SPYTSMEEYS (106 aa). A lipid anchor (S-palmitoyl cysteine) is attached at Cys376. Positions 416–467 are disordered; it reads DPSDADNTRSSRKKRATPGDPNFNGCSRRNSKSASTTSSFISSPYTSMEEYS. Over residues 447-467 the composition is skewed to low complexity; sequence KSASTTSSFISSPYTSMEEYS.

The protein belongs to the G-protein coupled receptor 1 family.

The protein resides in the cell membrane. Its function is as follows. This is a receptor for the tachykinin neuropeptide neuromedin-K (neurokinin B). It is associated with G proteins that activate a phosphatidylinositol-calcium second messenger system. This is Neuromedin-K receptor (TACR3) from Oryctolagus cuniculus (Rabbit).